A 200-amino-acid polypeptide reads, in one-letter code: ATP-dependent Clp protease proteolytic subunit 1 (200 aa).

The active-site Nucleophile is the S98. The active site involves H123.

It belongs to the peptidase S14 family. Fourteen ClpP subunits assemble into 2 heptameric rings which stack back to back to give a disk-like structure with a central cavity, resembling the structure of eukaryotic proteasomes.

The protein localises to the cytoplasm. It catalyses the reaction Hydrolysis of proteins to small peptides in the presence of ATP and magnesium. alpha-casein is the usual test substrate. In the absence of ATP, only oligopeptides shorter than five residues are hydrolyzed (such as succinyl-Leu-Tyr-|-NHMec, and Leu-Tyr-Leu-|-Tyr-Trp, in which cleavage of the -Tyr-|-Leu- and -Tyr-|-Trp bonds also occurs).. Its function is as follows. Cleaves peptides in various proteins in a process that requires ATP hydrolysis. Has a chymotrypsin-like activity. Plays a major role in the degradation of misfolded proteins. In Mycobacterium leprae (strain TN), this protein is ATP-dependent Clp protease proteolytic subunit 1.